Consider the following 706-residue polypeptide: Kinesin-like protein KIP2 (706 aa).

Low complexity-rich tracts occupy residues 1–28 (MIQK…QSPS) and 36–63 (SNLT…RSNS). The interval 1-139 (MIQKMSPSLR…QPRSNSHHGS (139 aa)) is disordered. The 392-residue stretch at 102-493 (SITVTIRPKP…LRFASRAKNV (392 aa)) folds into the Kinesin motor domain. Positions 127–139 (RYSQPRSNSHHGS) are enriched in polar residues. ATP is bound at residue 202 to 209 (GMTGSGKT). A disordered region spans residues 413-445 (VGSNIPSPSASGSSSSSGNATNNGTSPSNHIPY). Positions 414–441 (GSNIPSPSASGSSSSSGNATNNGTSPSN) are enriched in low complexity. Coiled-coil stretches lie at residues 507–541 (NNDG…NIGE), 569–589 (MRAE…LLDK), and 612–689 (TLLE…RALK).

This sequence belongs to the TRAFAC class myosin-kinesin ATPase superfamily. Kinesin family. Might be dimeric.

The protein localises to the cytoplasm. It localises to the cytoskeleton. Its function is as follows. Required for assembly of the mitotic spindle. This chain is Kinesin-like protein KIP2 (KIP2), found in Saccharomyces cerevisiae (strain ATCC 204508 / S288c) (Baker's yeast).